The primary structure comprises 211 residues: ATP phosphoribosyltransferase (211 aa).

It belongs to the ATP phosphoribosyltransferase family. Short subfamily. Heteromultimer composed of HisG and HisZ subunits.

It is found in the cytoplasm. It carries out the reaction 1-(5-phospho-beta-D-ribosyl)-ATP + diphosphate = 5-phospho-alpha-D-ribose 1-diphosphate + ATP. It functions in the pathway amino-acid biosynthesis; L-histidine biosynthesis; L-histidine from 5-phospho-alpha-D-ribose 1-diphosphate: step 1/9. Functionally, catalyzes the condensation of ATP and 5-phosphoribose 1-diphosphate to form N'-(5'-phosphoribosyl)-ATP (PR-ATP). Has a crucial role in the pathway because the rate of histidine biosynthesis seems to be controlled primarily by regulation of HisG enzymatic activity. This Hahella chejuensis (strain KCTC 2396) protein is ATP phosphoribosyltransferase.